Here is a 393-residue protein sequence, read N- to C-terminus: Arginine--pyruvate transaminase AruH (393 aa).

An N6-(pyridoxal phosphate)lysine modification is found at lysine 237.

The protein belongs to the class-I pyridoxal-phosphate-dependent aminotransferase family. Homodimer. The cofactor is pyridoxal 5'-phosphate.

The enzyme catalyses L-arginine + pyruvate = 5-guanidino-2-oxopentanoate + L-alanine. The protein operates within amino-acid degradation; L-arginine degradation. Functionally, catalyzes the conversion of L-arginine into 2-ketoarginine via transamination. L-arginine is the best substrate, but it can also use L-lysine, L-methionine, L-leucine, ornithine and L-glutamine, which indicates that it may have a broader physiological function in amino acid catabolism. The polypeptide is Arginine--pyruvate transaminase AruH (aruH) (Pseudomonas aeruginosa (strain ATCC 15692 / DSM 22644 / CIP 104116 / JCM 14847 / LMG 12228 / 1C / PRS 101 / PAO1)).